The chain runs to 365 residues: Class I histocompatibility antigen, B alpha chain (365 aa).

Residues 1–24 form the signal peptide; the sequence is MTVMAPRTLLLLLSGALVLTETWA. An alpha-1 region spans residues 25-114; it reads GSHSMRYFST…ALGYYNQSEA (90 aa). Topologically, residues 25–308 are extracellular; that stretch reads GSHSMRYFST…EPPSQPTIPI (284 aa). Residue N110 is glycosylated (N-linked (GlcNAc...) asparagine). The tract at residues 115 to 206 is alpha-2; it reads GSHTIQMMSG…ENGKETLQRA (92 aa). Intrachain disulfides connect C125/C188 and C227/C283. The segment at 207–298 is alpha-3; sequence EPPKTHVTHH…GLPEPLTLRW (92 aa). One can recognise an Ig-like C1-type domain in the interval 209–297; the sequence is PKTHVTHHPV…EGLPEPLTLR (89 aa). The segment at 299 to 308 is connecting peptide; it reads EPPSQPTIPI. The helical transmembrane segment at 309–332 threads the bilayer; sequence MGIVAILAILGAVVTGAVVTAVMW. Over 333 to 365 the chain is Cytoplasmic; sequence RKKSSDKKGGSYSQAARSDSAQGSDVSLTACKV. Residues 337–361 form a disordered region; the sequence is SDKKGGSYSQAARSDSAQGSDVSLT. The segment covering 346 to 359 has biased composition (polar residues); it reads QAARSDSAQGSDVS. Residues S356 and S359 each carry the phosphoserine modification.

The protein belongs to the MHC class I family. As to quaternary structure, heterodimer of an alpha chain and a beta chain (beta-2-microglobulin).

The protein localises to the membrane. Functionally, involved in the presentation of foreign antigens to the immune system. In Saguinus oedipus (Cotton-top tamarin), this protein is Class I histocompatibility antigen, B alpha chain.